The following is a 133-amino-acid chain: Fatty acid-binding protein, heart (133 aa).

At V2 the chain carries N-acetylvaline. The residue at position 8 (T8) is a Phosphothreonine. Y20 is modified (phosphotyrosine; by Tyr-kinases). The residue at position 23 (S23) is a Phosphoserine. T30 carries the phosphothreonine modification. S83 carries the phosphoserine modification. 127–129 is a binding site for (9Z)-octadecenoate; the sequence is RTY. 127-129 contributes to the hexadecanoate binding site; that stretch reads RTY. 127 to 129 provides a ligand contact to octadecanoate; it reads RTY.

This sequence belongs to the calycin superfamily. Fatty-acid binding protein (FABP) family.

It localises to the cytoplasm. In terms of biological role, FABPs are thought to play a role in the intracellular transport of long-chain fatty acids and their acyl-CoA esters. The polypeptide is Fatty acid-binding protein, heart (FABP3) (Sus scrofa (Pig)).